Here is a 166-residue protein sequence, read N- to C-terminus: NADH-quinone oxidoreductase subunit I (166 aa).

4Fe-4S ferredoxin-type domains are found at residues L57–E87 and T97–I126. [4Fe-4S] cluster contacts are provided by C67, C70, C73, C77, C106, C109, C112, and C116.

It belongs to the complex I 23 kDa subunit family. As to quaternary structure, NDH-1 is composed of 14 different subunits. Subunits NuoA, H, J, K, L, M, N constitute the membrane sector of the complex. [4Fe-4S] cluster serves as cofactor.

The protein resides in the cell inner membrane. It carries out the reaction a quinone + NADH + 5 H(+)(in) = a quinol + NAD(+) + 4 H(+)(out). Functionally, NDH-1 shuttles electrons from NADH, via FMN and iron-sulfur (Fe-S) centers, to quinones in the respiratory chain. The immediate electron acceptor for the enzyme in this species is believed to be ubiquinone. Couples the redox reaction to proton translocation (for every two electrons transferred, four hydrogen ions are translocated across the cytoplasmic membrane), and thus conserves the redox energy in a proton gradient. This chain is NADH-quinone oxidoreductase subunit I, found in Legionella pneumophila (strain Paris).